The chain runs to 729 residues: MLYKGDTLYLDWLEDGIAELVFDAPGSVNKLDTATVASLGEAIGVLEQQSDLKGLLLRSNKAAFIVGADITEFLSLFLVPEEQLSQWLHFANSVFNRLEDLPVPTIAAANGYALGGGCECVLATDYRLATPDLRIGLPETKLGIMPGFGGSVRMPRMLGADSALEIIAAGKDVGADQALKIGLVDGVVKAEKLVEGAKAVLRQAINGDLDWKAKRQPKLEPLKLSKIEATMSFTIAKGMVAQTAGKHYPAPITAVKTIEAAARFGREEALNLENKSFVPLAHTNEARALVGIFLNDQYVKGKAKKLTKDVETPKQAAVLGAGIMGGGIAYQSAWKGVPVVMKDINDKSLTLGMTEAAKLLNKQLERGKIDGLKLAGVISTIHPTLDYAGFDRVDVVVEAVVENPKVKKAVLAETEQKVRPDTVLASNTSTIPISELANALERPENFCGMHFFNPVHRMPLVEIIRGEKSSDETIAKVVAWASKMGKTPIVVNDCPGFFVNRVLFPYFAGFSQLLRDGADFRKIDKVMEKQFGWPMGPAYLLDVVGIDTAHHAQAVMAAGFPQRMQKDYRDAIDALFDANRFGQKNGLGFWRYKEDSKGKPKKEEDAAVEDLLAEVSQPKRDFSEEEIIARMMIPMVNEVVRCLEEGIIATPAEADMALVYGLGFPPFHGGAFRWLDTLGSAKYLDMAQQYQHLGPLYEVPEGLRNKARHNEPYYPPVEPARLVGDLKTA.

The tract at residues 1 to 189 (MLYKGDTLYL…KIGLVDGVVK (189 aa)) is enoyl-CoA hydratase/isomerase. Substrate is bound at residue Asp296. A 3-hydroxyacyl-CoA dehydrogenase region spans residues 311–729 (ETPKQAAVLG…ARLVGDLKTA (419 aa)). NAD(+)-binding positions include Met324, Asp343, 400–402 (VVE), Lys407, and Ser429. The For 3-hydroxyacyl-CoA dehydrogenase activity role is filled by His450. Asn453 contacts NAD(+). The substrate site is built by Asn500 and Tyr660.

In the N-terminal section; belongs to the enoyl-CoA hydratase/isomerase family. It in the C-terminal section; belongs to the 3-hydroxyacyl-CoA dehydrogenase family. Heterotetramer of two alpha chains (FadB) and two beta chains (FadA).

It catalyses the reaction a (3S)-3-hydroxyacyl-CoA + NAD(+) = a 3-oxoacyl-CoA + NADH + H(+). It carries out the reaction a (3S)-3-hydroxyacyl-CoA = a (2E)-enoyl-CoA + H2O. The enzyme catalyses a 4-saturated-(3S)-3-hydroxyacyl-CoA = a (3E)-enoyl-CoA + H2O. The catalysed reaction is (3S)-3-hydroxybutanoyl-CoA = (3R)-3-hydroxybutanoyl-CoA. It catalyses the reaction a (3Z)-enoyl-CoA = a 4-saturated (2E)-enoyl-CoA. It carries out the reaction a (3E)-enoyl-CoA = a 4-saturated (2E)-enoyl-CoA. The protein operates within lipid metabolism; fatty acid beta-oxidation. Its function is as follows. Involved in the aerobic and anaerobic degradation of long-chain fatty acids via beta-oxidation cycle. Catalyzes the formation of 3-oxoacyl-CoA from enoyl-CoA via L-3-hydroxyacyl-CoA. It can also use D-3-hydroxyacyl-CoA and cis-3-enoyl-CoA as substrate. The protein is Fatty acid oxidation complex subunit alpha of Escherichia coli (strain SE11).